The sequence spans 584 residues: Arginine--tRNA ligase (584 aa).

The short motif at 127-137 (PNTNKPLHIGH) is the 'HIGH' region element.

Belongs to the class-I aminoacyl-tRNA synthetase family. As to quaternary structure, monomer.

The protein resides in the cytoplasm. The catalysed reaction is tRNA(Arg) + L-arginine + ATP = L-arginyl-tRNA(Arg) + AMP + diphosphate. The polypeptide is Arginine--tRNA ligase (Borrelia hermsii (strain HS1 / DAH)).